We begin with the raw amino-acid sequence, 94 residues long: Beta-defensin 132 (94 aa).

The signal sequence occupies residues 1-22; that stretch reads MKFLLLVLAALGFLTQVIPASA. Intrachain disulfides connect Cys-27/Cys-55 and Cys-39/Cys-56. Residues 72–94 form a disordered region; sequence GNHWQSRRNTQRKDKKQQTTVTS. Residues 76–86 show a composition bias toward basic residues; the sequence is QSRRNTQRKDK.

Belongs to the beta-defensin family.

The protein resides in the secreted. Has antibacterial activity. The chain is Beta-defensin 132 (DEFB132) from Gorilla gorilla gorilla (Western lowland gorilla).